A 141-amino-acid polypeptide reads, in one-letter code: Large ribosomal subunit protein uL11 (141 aa).

It belongs to the universal ribosomal protein uL11 family. In terms of assembly, part of the ribosomal stalk of the 50S ribosomal subunit. Interacts with L10 and the large rRNA to form the base of the stalk. L10 forms an elongated spine to which L12 dimers bind in a sequential fashion forming a multimeric L10(L12)X complex. In terms of processing, one or more lysine residues are methylated.

In terms of biological role, forms part of the ribosomal stalk which helps the ribosome interact with GTP-bound translation factors. This is Large ribosomal subunit protein uL11 from Clostridium botulinum (strain Kyoto / Type A2).